The sequence spans 334 residues: Cytoskeleton protein RodZ (334 aa).

Residues 1–111 (MNTEATHDQN…LGKRRKKRDG (111 aa)) lie on the Cytoplasmic side of the membrane. The 53-residue stretch at 19-71 (LRNAREQLGLSQQAVAERLCLKVSTVRDIEEDKAPSDLASTFLRGYIRSYARL) folds into the HTH cro/C1-type domain. Residues 30–49 (QQAVAERLCLKVSTVRDIEE) constitute a DNA-binding region (H-T-H motif). The helical; Signal-anchor for type II membrane protein transmembrane segment at 112 to 132 (WLMSFTWLVLFVVVGLTGAWW) threads the bilayer. Over 133–334 (WQNHKAQQEE…TLNAEPTPAQ (202 aa)) the chain is Periplasmic. A disordered region spans residues 154-241 (LNADKDSGQS…PSALPTSQAG (88 aa)). 2 stretches are compositionally biased toward low complexity: residues 176 to 211 (TTPA…TVVA) and 219 to 241 (TAAT…SQAG).

This sequence belongs to the RodZ family.

Its subcellular location is the cell inner membrane. Cytoskeletal protein that is involved in cell-shape control through regulation of the length of the long axis. In Salmonella choleraesuis (strain SC-B67), this protein is Cytoskeleton protein RodZ.